We begin with the raw amino-acid sequence, 401 residues long: Pyruvyl transferase 1 (401 aa).

Residues 1–30 (MFANINIRKSVWLFLLAAVSCTLFIYGVTR) form the signal peptide. Residues 38–64 (NPSSLTSPSSSTSVDKKKPLFTKSPRN) are disordered. Residues 39–50 (PSSLTSPSSSTS) are compositionally biased toward low complexity.

It belongs to the polysaccharide pyruvyl transferase family.

In terms of biological role, involved in cell wall biogenesis. Has a role in the addition of Gal-beta1,3 moieties to galactomannans and their subsequent pyruvylation. In Schizosaccharomyces pombe (strain 972 / ATCC 24843) (Fission yeast), this protein is Pyruvyl transferase 1 (pvg1).